Consider the following 332-residue polypeptide: Biotin synthase (332 aa).

Positions 53–282 (YFGKKVKLNM…TKEIRISGGR (230 aa)) constitute a Radical SAM core domain. [4Fe-4S] cluster is bound by residues Cys-71, Cys-75, and Cys-78. Cys-115, Cys-147, Cys-207, and Arg-277 together coordinate [2Fe-2S] cluster.

The protein belongs to the radical SAM superfamily. Biotin synthase family. Homodimer. The cofactor is [4Fe-4S] cluster. [2Fe-2S] cluster is required as a cofactor.

The catalysed reaction is (4R,5S)-dethiobiotin + (sulfur carrier)-SH + 2 reduced [2Fe-2S]-[ferredoxin] + 2 S-adenosyl-L-methionine = (sulfur carrier)-H + biotin + 2 5'-deoxyadenosine + 2 L-methionine + 2 oxidized [2Fe-2S]-[ferredoxin]. It functions in the pathway cofactor biosynthesis; biotin biosynthesis; biotin from 7,8-diaminononanoate: step 2/2. Functionally, catalyzes the conversion of dethiobiotin (DTB) to biotin by the insertion of a sulfur atom into dethiobiotin via a radical-based mechanism. The polypeptide is Biotin synthase (Bacillus thuringiensis (strain Al Hakam)).